Here is a 482-residue protein sequence, read N- to C-terminus: G patch domain-containing protein 2-like (482 aa).

Phosphoserine is present on residues serine 31, serine 86, and serine 88. Threonine 91 is modified (phosphothreonine). 2 disordered regions span residues 195–222 (SQPG…SECD) and 408–482 (KRKR…TNGC). The span at 198–215 (GRKERMECEAEEQKHGSD) shows a compositional bias: basic and acidic residues. The span at 414–427 (VASASFSSPSPVHP) shows a compositional bias: low complexity. Polar residues predominate over residues 468 to 482 (EKNSGCSSSPGTNGC).

The polypeptide is G patch domain-containing protein 2-like (Gpatch2l) (Mus musculus (Mouse)).